The primary structure comprises 256 residues: ATP synthase peripheral stalk subunit b, mitochondrial (256 aa).

The N-terminal 42 residues, 1 to 42 (MLSRVVLSAAAAAAPSLKNAALLGPGVLQATRIFHTGQPSLA), are a transit peptide targeting the mitochondrion. An N6-succinyllysine modification is found at Lys-131. Residues Lys-139, Lys-154, Lys-162, Lys-221, Lys-233, and Lys-244 each carry the N6-acetyllysine modification.

Belongs to the eukaryotic ATPase B chain family. As to quaternary structure, component of the ATP synthase complex composed at least of ATP5F1A/subunit alpha, ATP5F1B/subunit beta, ATP5MC1/subunit c (homooctomer), MT-ATP6/subunit a, MT-ATP8/subunit 8, ATP5ME/subunit e, ATP5MF/subunit f, ATP5MG/subunit g, ATP5MK/subunit k, ATP5MJ/subunit j, ATP5F1C/subunit gamma, ATP5F1D/subunit delta, ATP5F1E/subunit epsilon, ATP5PF/subunit F6, ATP5PB/subunit b, ATP5PD/subunit d, ATP5PO/subunit OSCP. ATP synthase complex consists of a soluble F(1) head domain (subunits alpha(3) and beta(3)) - the catalytic core - and a membrane F(0) domain - the membrane proton channel (subunits c, a, 8, e, f, g, k and j). These two domains are linked by a central stalk (subunits gamma, delta, and epsilon) rotating inside the F1 region and a stationary peripheral stalk (subunits F6, b, d, and OSCP).

The protein resides in the mitochondrion. The protein localises to the mitochondrion inner membrane. Its function is as follows. Subunit b, of the mitochondrial membrane ATP synthase complex (F(1)F(0) ATP synthase or Complex V) that produces ATP from ADP in the presence of a proton gradient across the membrane which is generated by electron transport complexes of the respiratory chain. ATP synthase complex consist of a soluble F(1) head domain - the catalytic core - and a membrane F(1) domain - the membrane proton channel. These two domains are linked by a central stalk rotating inside the F(1) region and a stationary peripheral stalk. During catalysis, ATP synthesis in the catalytic domain of F(1) is coupled via a rotary mechanism of the central stalk subunits to proton translocation. In vivo, can only synthesize ATP although its ATP hydrolase activity can be activated artificially in vitro. Part of the complex F(0) domain. Part of the complex F(0) domain and the peripheric stalk, which acts as a stator to hold the catalytic alpha(3)beta(3) subcomplex and subunit a/ATP6 static relative to the rotary elements. This is ATP synthase peripheral stalk subunit b, mitochondrial from Bos taurus (Bovine).